Consider the following 1464-residue polypeptide: Glutamate receptor ionotropic, NMDA 2A (1464 aa).

Positions 1–22 (MGRVGYWTLLVLPALLVWRGPA) are cleaved as a signal peptide. Over 23–556 (PSAAAEKGPP…SAFLEPFSAS (534 aa)) the chain is Extracellular. Position 44 (His-44) interacts with Zn(2+). A glycan (N-linked (GlcNAc...) asparagine) is linked at Asn-75. Cys-87 and Cys-320 form a disulfide bridge. The Zn(2+) site is built by His-128, Glu-266, and Asp-282. N-linked (GlcNAc...) asparagine glycosylation is found at Asn-340, Asn-380, Asn-443, and Asn-444. Cystine bridges form between Cys-429–Cys-455 and Cys-436–Cys-456. The L-glutamate site is built by Ser-511, Thr-513, and Arg-518. N-linked (GlcNAc...) asparagine glycosylation occurs at Asn-541. A helical membrane pass occupies residues 557-576 (VWVMMFVMLLIVSAIAVFVF). The Cytoplasmic segment spans residues 577–600 (EYFSPVGYNRNLAKGKAPHGPSFT). The tract at residues 599 to 620 (FTIGKAIWLLWGLVFNNSVPVQ) is pore-forming. An intramembrane region (discontinuously helical) is located at residues 601–615 (IGKAIWLLWGLVFNN). The Cytoplasmic portion of the chain corresponds to 616-625 (SVPVQNPKGT). Residues 626-646 (TSKIMVSVWAFFAVIFLASYT) traverse the membrane as a helical segment. The Extracellular portion of the chain corresponds to 647–814 (ANLAAFMIQE…NEVMSSQLDI (168 aa)). The N-linked (GlcNAc...) asparagine glycan is linked to Asn-687. L-glutamate contacts are provided by Ser-689, Thr-690, and Asp-731. A disulfide bridge links Cys-745 with Cys-800. The chain crosses the membrane as a helical span at residues 815-835 (DNMAGVFYMLAAAMALSLITF). At 836–1464 (IWEHLFYWKL…KKMPSIESDV (629 aa)) the chain is on the cytoplasmic side. 3 positions are modified to phosphoserine: Ser-882, Ser-890, and Ser-929. Polar residues-rich tracts occupy residues 997 to 1010 (EVAVSTESKANSRP) and 1023 to 1032 (QDSLSQNPVS). Residues 997–1083 (EVAVSTESKA…PDNSKNHKTK (87 aa)) are disordered. A Phosphoserine modification is found at Ser-1025. Basic and acidic residues-rich tracts occupy residues 1033–1043 (QRDEATAENRT) and 1052–1061 (LPEEMAHSDI). 2 positions are modified to phosphoserine: Ser-1059 and Ser-1062. Residues 1070–1083 (CHREPDNSKNHKTK) are compositionally biased toward basic and acidic residues. Phosphoserine occurs at positions 1198 and 1291. Residues 1335–1372 (KLSGKKSSLFPQGLEDSKRSKSLLPDHTSDNPFLHSHR) form a disordered region. The PDZ-binding signature appears at 1462 to 1464 (SDV).

The protein belongs to the glutamate-gated ion channel (TC 1.A.10.1) family. NR2A/GRIN2A subfamily. Heterotetramer. Forms heterotetrameric channels composed of two GluN1/zeta subunits (GRIN1), and two identical GluN2/epsilon subunits (GRIN2A, GRIN2B, GRIN2C or GRIN2D) or GluN3 subunits (GRIN3A or GRIN3B) (in vitro). Can also form heterotetrameric channels that contain at least two GluN1 subunits and at least two different GluN2 subunits (or a combination of one GluN2 and one GluN3 subunits) (in vitro). In vivo, the subunit composition may depend on the expression levels of the different subunits. Found in a complex with GRIN1, GRIN3A and PPP2CB. Found in a complex with GRIN1 and GRIN3B. Interacts with AIP1. Interacts with HIP1 and NETO1. Interacts with SNX27 (via PDZ domain); the interaction is required for recycling to the plasma membrane when endocytosed and prevent degradation in lysosomes. Interacts with PDZ domains of PATJ and DLG4. Interacts with LRFN2. Interacts with RPH3A and DLG4; this ternary complex regulates NMDA receptor composition at postsynaptic membranes. Interacts with SORCS2. Interacts with ARC; preventing ARC oligomerization. Interacts (via the extreme C-terminus) with FRMPD2 (the second PDZ domain); the interaction is direct and is likely to promote NMDAR-mediated neural signal transmission. GRIN2A binds FRMPD2 with lower affinity than GRIN2B.

Its subcellular location is the cell projection. It is found in the dendritic spine. The protein localises to the cell membrane. The protein resides in the synapse. It localises to the postsynaptic cell membrane. Its subcellular location is the cytoplasmic vesicle membrane. The catalysed reaction is Ca(2+)(in) = Ca(2+)(out). It catalyses the reaction Na(+)(in) = Na(+)(out). The enzyme catalyses K(+)(in) = K(+)(out). NMDA glutamate receptor activity is inhibited by endogenous Mg(2+) in a voltage-dependent manner. NMDA glutamate receptor activity is inhibited by endogenous Zn(2+). NMDA glutamate receptor activity is inhibited by endogenous protons. Its function is as follows. Component of N-methyl-D-aspartate (NMDA) receptors (NMDARs) that function as heterotetrameric, ligand-gated cation channels with high calcium permeability and voltage-dependent block by Mg(2+). NMDARs participate in synaptic plasticity for learning and memory formation by contributing to the slow phase of excitatory postsynaptic current, long-term synaptic potentiation, and learning. Channel activation requires binding of the neurotransmitter L-glutamate to the GluN2 subunit, glycine or D-serine binding to the GluN1 subunit, plus membrane depolarization to eliminate channel inhibition by Mg(2+). NMDARs mediate simultaneously the potasium efflux and the influx of calcium and sodium. Each GluN2 subunit confers differential attributes to channel properties, including activation, deactivation and desensitization kinetics, pH sensitivity, Ca2(+) permeability, and binding to allosteric modulators. Participates in the synaptic plasticity regulation through activation by the L-glutamate releaseed by BEST1, into the synaptic cleft, upon F2R/PAR-1 activation in astrocyte. The polypeptide is Glutamate receptor ionotropic, NMDA 2A (Homo sapiens (Human)).